The primary structure comprises 93 residues: MKTLLLTLVVVTIVCLDLGYTLLCYKTPSPINAETCPPGENLCYTKMWCDAWCSSRGKVIELGCAATCPSKKPYEEVDCCSTDNCNPHPKLRP.

The N-terminal stretch at 1–21 is a signal peptide; sequence MKTLLLTLVVVTIVCLDLGYT. Disulfide bonds link C24-C43, C36-C64, C49-C53, C68-C79, and C80-C85.

This sequence belongs to the three-finger toxin family. Long-chain subfamily. Type II alpha-neurotoxin sub-subfamily. Expressed by the venom gland.

The protein localises to the secreted. Binds with high affinity to muscular (alpha-1/CHRNA1) and neuronal (alpha-7/CHRNA7) nicotinic acetylcholine receptor (nAChR) and inhibits acetylcholine from binding to the receptor, thereby impairing neuromuscular and neuronal transmission. This Ophiophagus hannah (King cobra) protein is Alpha-elapitoxin-Oh2a.